The chain runs to 1372 residues: Paired amphipathic helix protein Sin3-like 1 (1372 aa).

The tract at residues 1–50 (MKRIRDDVYASGSQFRRPLGSSRGQLCGQSPVHGSGDTEEEEEGGSRRVS) is disordered. 2 PAH domains span residues 51–121 (QKLT…LPKG) and 136–206 (KTVE…LPAS). Residues 210 to 222 (HSAAQHSRSQAQQ) show a composition bias toward low complexity. Disordered regions lie at residues 210–244 (HSAAQHSRSQAQQYSDRGSDPPLLHQMQVEKERRR) and 272–323 (REQR…SGSA). A compositionally biased stretch (basic and acidic residues) spans 272-315 (REQRKRLDKENRARRGRDLDDREAGQDNLHHFPEKRKSSRRAEA). In terms of domain architecture, PAH 3 spans 331 to 400 (LKSMYKQAFV…DEFNQFFERC (70 aa)). Disordered stretches follow at residues 764–783 (DVNHSTSPNGEAAVSSGGDT), 791–817 (LKSAANGDENSSSGTFKHGIGLLNKDS), and 934–1056 (GLRS…AEGM). A compositionally biased stretch (basic and acidic residues) spans 938–957 (DSSKGTRNSDDPEGPSRNEK). Composition is skewed to acidic residues over residues 990 to 1013 (AEAEVEADAEVENEDDADDVDSEN) and 1028 to 1042 (SQDEDREEENGEHDE). Serine 1049 bears the Phosphoserine mark.

As to quaternary structure, interacts (via PAH3) with ALY2. Interacts (via PAH2) with TBP1. Interacts with ALY3, GATA21, TRP2, TKI1, VAL1, SKP1B, FBX5 and PUB14.

The protein localises to the nucleus. Functionally, acts as a transcriptional repressor. A histone deacetylase (HDAC) activity is required for transcription repression. May play a role in telomere stability. The protein is Paired amphipathic helix protein Sin3-like 1 (SNL1) of Arabidopsis thaliana (Mouse-ear cress).